A 347-amino-acid chain; its full sequence is NADH-ubiquinone oxidoreductase chain 2 (347 aa).

A run of 11 helical transmembrane segments spans residues 3–23 (PLIF…VMIS), 25–45 (HWLM…PVLM), 59–79 (YFLT…INLL), 96–116 (IIMT…FWVP), 122–142 (VSLT…LSVL), 145–165 (IAPV…IMIG), 178–198 (ILAY…IFNP), 202–222 (LLNL…FMTV), 240–260 (ITTS…LTGF), 276–296 (IILA…YMRL), and 326–346 (LSPL…MMIL).

This sequence belongs to the complex I subunit 2 family. As to quaternary structure, core subunit of respiratory chain NADH dehydrogenase (Complex I) which is composed of 45 different subunits. Interacts with TMEM242.

The protein resides in the mitochondrion inner membrane. The enzyme catalyses a ubiquinone + NADH + 5 H(+)(in) = a ubiquinol + NAD(+) + 4 H(+)(out). Functionally, core subunit of the mitochondrial membrane respiratory chain NADH dehydrogenase (Complex I) which catalyzes electron transfer from NADH through the respiratory chain, using ubiquinone as an electron acceptor. Essential for the catalytic activity and assembly of complex I. The chain is NADH-ubiquinone oxidoreductase chain 2 from Peropteryx macrotis (Lesser dog-like bat).